Consider the following 404-residue polypeptide: Cysteine desulfurase IscS (404 aa).

Pyridoxal 5'-phosphate contacts are provided by residues alanine 75–threonine 76, asparagine 155, glutamine 183, and serine 203–histidine 205. An N6-(pyridoxal phosphate)lysine modification is found at lysine 206. Pyridoxal 5'-phosphate is bound at residue threonine 243. The Cysteine persulfide intermediate role is filled by cysteine 328. [2Fe-2S] cluster is bound at residue cysteine 328.

Belongs to the class-V pyridoxal-phosphate-dependent aminotransferase family. NifS/IscS subfamily. In terms of assembly, homodimer. Forms a heterotetramer with IscU, interacts with other sulfur acceptors. The cofactor is pyridoxal 5'-phosphate.

The protein localises to the cytoplasm. The enzyme catalyses (sulfur carrier)-H + L-cysteine = (sulfur carrier)-SH + L-alanine. It functions in the pathway cofactor biosynthesis; iron-sulfur cluster biosynthesis. Master enzyme that delivers sulfur to a number of partners involved in Fe-S cluster assembly, tRNA modification or cofactor biosynthesis. Catalyzes the removal of elemental sulfur atoms from cysteine to produce alanine. Functions as a sulfur delivery protein for Fe-S cluster synthesis onto IscU, an Fe-S scaffold assembly protein, as well as other S acceptor proteins. The sequence is that of Cysteine desulfurase IscS from Pseudomonas syringae pv. syringae (strain B728a).